A 268-amino-acid chain; its full sequence is Type III pantothenate kinase (268 aa).

Residue 18 to 25 (DIGNTTTT) participates in ATP binding. Substrate contacts are provided by residues Tyr108 and 115–118 (GADR). The active-site Proton acceptor is Asp117. Asp138 is a K(+) binding site. Thr141 is a binding site for ATP. Residue Thr193 participates in substrate binding.

The protein belongs to the type III pantothenate kinase family. As to quaternary structure, homodimer. NH4(+) is required as a cofactor. It depends on K(+) as a cofactor.

The protein resides in the cytoplasm. The enzyme catalyses (R)-pantothenate + ATP = (R)-4'-phosphopantothenate + ADP + H(+). It participates in cofactor biosynthesis; coenzyme A biosynthesis; CoA from (R)-pantothenate: step 1/5. In terms of biological role, catalyzes the phosphorylation of pantothenate (Pan), the first step in CoA biosynthesis. This is Type III pantothenate kinase from Chlorobaculum parvum (strain DSM 263 / NCIMB 8327) (Chlorobium vibrioforme subsp. thiosulfatophilum).